Reading from the N-terminus, the 273-residue chain is Putative pyruvate, phosphate dikinase regulatory protein (273 aa).

An ADP-binding site is contributed by Gly149 to Thr156.

This sequence belongs to the pyruvate, phosphate/water dikinase regulatory protein family. PDRP subfamily.

It catalyses the reaction N(tele)-phospho-L-histidyl/L-threonyl-[pyruvate, phosphate dikinase] + ADP = N(tele)-phospho-L-histidyl/O-phospho-L-threonyl-[pyruvate, phosphate dikinase] + AMP + H(+). It carries out the reaction N(tele)-phospho-L-histidyl/O-phospho-L-threonyl-[pyruvate, phosphate dikinase] + phosphate + H(+) = N(tele)-phospho-L-histidyl/L-threonyl-[pyruvate, phosphate dikinase] + diphosphate. Bifunctional serine/threonine kinase and phosphorylase involved in the regulation of the pyruvate, phosphate dikinase (PPDK) by catalyzing its phosphorylation/dephosphorylation. The polypeptide is Putative pyruvate, phosphate dikinase regulatory protein (Rickettsia conorii (strain ATCC VR-613 / Malish 7)).